A 162-amino-acid chain; its full sequence is SCF ubiquitin ligase complex protein SKP1a (162 aa).

The residue at position 2 (S2) is an N-acetylserine. An interaction with the F-box domain of F-box proteins region spans residues 100-162 (ILAANYLDIK…NEWCEDKGGN (63 aa)). 4-hydroxyproline is present on P143. P143 carries an O-linked (GlcNAc...) hydroxyproline glycan.

The protein belongs to the SKP1 family. In terms of assembly, multiprotein complex (SCF) with cullin and F-box-containing protein. Capable of undergoing aggregation. Post-translationally, O-linked glycan consists of linear Gal-Gal-Fuc-Gal-GlcNAc. In terms of processing, fpaA and fpaB seem to be identically glycosylated. Glycosylation is required for nuclear enrichment. Hydroxylated by phyA.

Its subcellular location is the cytoplasm. The protein resides in the nucleus. The protein is SCF ubiquitin ligase complex protein SKP1a (fpaA) of Dictyostelium discoideum (Social amoeba).